The chain runs to 258 residues: MSKRPGDIIISTPGSKVRRRLNFDSPYRNRATAPTVHVTNRKRAWMNRPMYRKPMMYRMYRSPDIPRGCEGPCKVQSFEQRDDVKHLGICKVISDVTRGPGLTHRVGKRFCIKSIYILGKIWMDENIKKQNHTNNVMFYLLRDRRPYGNTPQDFGQIFNMFDNEPSTATIENDLRDRFQVLRKFHATVIGGPSGMKEQALVKRFYRLNHHVTYNHQEAGKYENHTENALLLYMACTHASNPVYATLKIRIYFYDSIGN.

The short motif at 3–20 (KRPGDIIISTPGSKVRRR) is the Bipartite nuclear localization signal element. The Nuclear localization signal motif lies at 41–55 (RKRAWMNRPMYRKPM). A zinc finger spans residues 69–86 (CEGPCKVQSFEQRDDVKH). Positions 102-123 (LTHRVGKRFCIKSIYILGKIWM) match the Nuclear export signal motif. A Bipartite nuclear localization signal motif is present at residues 202–249 (KRFYRLNHHVTYNHQEAGKYENHTENALLLYMACTHASNPVYATLKIR).

This sequence belongs to the geminiviridae capsid protein family. Homomultimer. Binds to single-stranded and double-stranded viral DNA. Interacts (via nuclear localization signals) with host importin alpha-1a.

It is found in the virion. The protein localises to the host nucleus. In terms of biological role, encapsidates the viral DNA into characteristic twinned ('geminate') particles. Binds the genomic viral ssDNA and shuttles it into and out of the cell nucleus. The CP of bipartite geminiviruses is not required for cell-to-cell or systemic movement. The sequence is that of Capsid protein from Hewittia sublobata (Coralbush).